Consider the following 257-residue polypeptide: Glutamate racemase (257 aa).

Substrate is bound by residues 12–13 (DS) and 44–45 (YG). Residue C75 is the Proton donor/acceptor of the active site. 76–77 (NT) provides a ligand contact to substrate. C185 (proton donor/acceptor) is an active-site residue. 186 to 187 (TH) contacts substrate.

It belongs to the aspartate/glutamate racemases family.

It carries out the reaction L-glutamate = D-glutamate. It participates in cell wall biogenesis; peptidoglycan biosynthesis. Its function is as follows. Provides the (R)-glutamate required for cell wall biosynthesis. The protein is Glutamate racemase of Clostridium botulinum (strain ATCC 19397 / Type A).